The chain runs to 185 residues: Elongation factor P (185 aa).

It belongs to the elongation factor P family.

Its subcellular location is the cytoplasm. It participates in protein biosynthesis; polypeptide chain elongation. Its function is as follows. Involved in peptide bond synthesis. Stimulates efficient translation and peptide-bond synthesis on native or reconstituted 70S ribosomes in vitro. Probably functions indirectly by altering the affinity of the ribosome for aminoacyl-tRNA, thus increasing their reactivity as acceptors for peptidyl transferase. The protein is Elongation factor P of Agathobacter rectalis (strain ATCC 33656 / DSM 3377 / JCM 17463 / KCTC 5835 / VPI 0990) (Eubacterium rectale).